The primary structure comprises 345 residues: Succinylglutamate desuccinylase (345 aa).

Zn(2+)-binding residues include His-63, Glu-66, and His-160. The active site involves Glu-224.

Belongs to the AspA/AstE family. Succinylglutamate desuccinylase subfamily. Requires Zn(2+) as cofactor.

The catalysed reaction is N-succinyl-L-glutamate + H2O = L-glutamate + succinate. It functions in the pathway amino-acid degradation; L-arginine degradation via AST pathway; L-glutamate and succinate from L-arginine: step 5/5. In terms of biological role, transforms N(2)-succinylglutamate into succinate and glutamate. The chain is Succinylglutamate desuccinylase from Shewanella woodyi (strain ATCC 51908 / MS32).